The sequence spans 74 residues: UPF0435 protein BAA_0470 (74 aa).

This sequence belongs to the UPF0435 family.

In Bacillus anthracis (strain A0248), this protein is UPF0435 protein BAA_0470.